A 215-amino-acid polypeptide reads, in one-letter code: Imidazole glycerol phosphate synthase subunit HisH (215 aa).

A Glutamine amidotransferase type-1 domain is found at 9–215; that stretch reads EVVLVDYGLG…QNFVDYCLER (207 aa). Cysteine 85 acts as the Nucleophile in catalysis. Residues histidine 193 and glutamate 195 contribute to the active site.

As to quaternary structure, heterodimer of HisH and HisF.

The protein localises to the cytoplasm. It catalyses the reaction 5-[(5-phospho-1-deoxy-D-ribulos-1-ylimino)methylamino]-1-(5-phospho-beta-D-ribosyl)imidazole-4-carboxamide + L-glutamine = D-erythro-1-(imidazol-4-yl)glycerol 3-phosphate + 5-amino-1-(5-phospho-beta-D-ribosyl)imidazole-4-carboxamide + L-glutamate + H(+). It carries out the reaction L-glutamine + H2O = L-glutamate + NH4(+). It participates in amino-acid biosynthesis; L-histidine biosynthesis; L-histidine from 5-phospho-alpha-D-ribose 1-diphosphate: step 5/9. Its function is as follows. IGPS catalyzes the conversion of PRFAR and glutamine to IGP, AICAR and glutamate. The HisH subunit catalyzes the hydrolysis of glutamine to glutamate and ammonia as part of the synthesis of IGP and AICAR. The resulting ammonia molecule is channeled to the active site of HisF. In Natronomonas pharaonis (strain ATCC 35678 / DSM 2160 / CIP 103997 / JCM 8858 / NBRC 14720 / NCIMB 2260 / Gabara) (Halobacterium pharaonis), this protein is Imidazole glycerol phosphate synthase subunit HisH.